The primary structure comprises 475 residues: Squamosa promoter-binding-like protein 12 (475 aa).

Positions asparagine 49–serine 73 are disordered. Positions glycine 51–serine 73 are enriched in low complexity. The SBP-type zinc finger occupies serine 177–proline 254. Zn(2+) contacts are provided by cysteine 180, cysteine 185, cysteine 202, histidine 205, cysteine 221, cysteine 224, histidine 228, and cysteine 240. Residues lysine 237–lysine 253 carry the Bipartite nuclear localization signal motif. The disordered stretch occupies residues glycine 437–histidine 475. Polar residues predominate over residues asparagine 465 to histidine 475.

Expressed in young panicles.

The protein resides in the nucleus. Its function is as follows. Trans-acting factor that binds specifically to the consensus nucleotide sequence 5'-TNCGTACAA-3'. May be involved in panicle development. This chain is Squamosa promoter-binding-like protein 12 (SPL12), found in Oryza sativa subsp. japonica (Rice).